A 287-amino-acid chain; its full sequence is tRNA uridine(34) hydroxylase (287 aa).

In terms of domain architecture, Rhodanese spans 132 to 226; sequence EGRPVVMLDT…YFEEVGGAHY (95 aa). Cys-186 serves as the catalytic Cysteine persulfide intermediate.

The protein belongs to the TrhO family.

It carries out the reaction uridine(34) in tRNA + AH2 + O2 = 5-hydroxyuridine(34) in tRNA + A + H2O. Catalyzes oxygen-dependent 5-hydroxyuridine (ho5U) modification at position 34 in tRNAs. This is tRNA uridine(34) hydroxylase from Paraburkholderia xenovorans (strain LB400).